Reading from the N-terminus, the 250-residue chain is Coproheme decarboxylase (250 aa).

Fe-coproporphyrin III contacts are provided by residues R131, 145-149 (YPMNK), H172, and Q185. Residue Y145 is part of the active site.

The protein belongs to the ChdC family. Type 1 subfamily. Fe-coproporphyrin III serves as cofactor.

The catalysed reaction is Fe-coproporphyrin III + 2 H2O2 + 2 H(+) = heme b + 2 CO2 + 4 H2O. It catalyses the reaction Fe-coproporphyrin III + H2O2 + H(+) = harderoheme III + CO2 + 2 H2O. It carries out the reaction harderoheme III + H2O2 + H(+) = heme b + CO2 + 2 H2O. It functions in the pathway porphyrin-containing compound metabolism; protoheme biosynthesis. Its function is as follows. Involved in coproporphyrin-dependent heme b biosynthesis. Catalyzes the decarboxylation of Fe-coproporphyrin III (coproheme) to heme b (protoheme IX), the last step of the pathway. The reaction occurs in a stepwise manner with a three-propionate intermediate. This Staphylococcus aureus (strain MRSA252) protein is Coproheme decarboxylase.